Here is a 227-residue protein sequence, read N- to C-terminus: Flagellar L-ring protein (227 aa).

The first 16 residues, 1–16 (MRNIILFAAGTLLLSG), serve as a signal peptide directing secretion. Residue C17 is the site of N-palmitoyl cysteine attachment. C17 carries the S-diacylglycerol cysteine lipid modification.

The protein belongs to the FlgH family. In terms of assembly, the basal body constitutes a major portion of the flagellar organelle and consists of four rings (L,P,S, and M) mounted on a central rod.

Its subcellular location is the cell outer membrane. The protein resides in the bacterial flagellum basal body. Assembles around the rod to form the L-ring and probably protects the motor/basal body from shearing forces during rotation. The sequence is that of Flagellar L-ring protein from Pseudoalteromonas translucida (strain TAC 125).